Consider the following 1059-residue polypeptide: Cellulose synthase catalytic subunit A [UDP-forming] (1059 aa).

Disordered stretches follow at residues 1 to 159 (MDRN…RFDT) and 174 to 220 (MRQH…KHVA). Over residues 15 to 36 (NNINSSGGSYNNSMNNSSNNIG) the composition is skewed to low complexity. Polar residues-rich tracts occupy residues 40 to 57 (GNNQ…QSNL) and 142 to 154 (NSPS…TSGG). A compositionally biased stretch (low complexity) spans 181-194 (QEQQQQQQQQQQQQ). Residues 204–219 (QKKKPSSMQLSKKKHV) are compositionally biased toward basic residues. Transmembrane regions (helical) follow at residues 246–266 (FSHA…IFYF), 280–300 (ITFS…LGSA), and 306–323 (FTNP…QILA). A catalytic subdomain A region spans residues 328 to 628 (KHPTVMMYVC…FLGLLDADQQ (301 aa)). D370 is a catalytic residue. Residues D624 and D626 each contribute to the substrate site. A catalytic subdomain B region spans residues 701-761 (QPLYDIGGIM…EQRKRWAQGA (61 aa)). D717 is a catalytic residue. The next 2 helical transmembrane spans lie at 790 to 810 (IYPF…IMSI) and 813 to 833 (VPIV…PVMV). Positions 933–953 (DNAQESSGKHKAEQSFRTSNK) are disordered. Basic and acidic residues predominate over residues 939-953 (SGKHKAEQSFRTSNK). 3 helical membrane-spanning segments follow: residues 963 to 983 (LFLP…SAVL), 993 to 1013 (WLLV…WSFI), and 1035 to 1055 (IVLF…KVCI).

The protein belongs to the glycosyltransferase 2 family. It depends on Mg(2+) as a cofactor.

It localises to the membrane. It catalyses the reaction [(1-&gt;4)-beta-D-glucosyl](n) + UDP-alpha-D-glucose = [(1-&gt;4)-beta-D-glucosyl](n+1) + UDP + H(+). It participates in glycan metabolism; amoeba cellulose biosynthesis. In terms of biological role, catalytic subunit of cellulose synthase. It incorporates glucose from uridine 5'-diphosphate glucose (UDP-alpha-D-glucose) to cellulose (a (1-&gt;4)-beta-D-glucan), which is produced as an extracellular component for mechanical and chemical protection at the onset of the stalk formation, when the cells exhibit multicellular behavior during culmination. The polypeptide is Cellulose synthase catalytic subunit A [UDP-forming] (dcsA) (Dictyostelium discoideum (Social amoeba)).